A 324-amino-acid chain; its full sequence is MKFGLFFLNFINSTTIQEQSIARMQEITEYVDKLNFEQILVCENHFSDNGVVGAPLTVSGFLLGLTEKIKIGSLNHVITTHHPVRIAEEACLLDQLSEGRFILGFSDCERKDEMPFFNRPEQYQQQLFEECYDIINDALTTGYCNPNGDFYNFPKISMNPHAYTQNGPRKYVTATSCHVVEWAAKKGIPLIFKWDDSNEVKHEYAKRYQAIAGEYGVDLAEIDHQLMILVNYSEDSEKAKEETRAFISDYILAMHPNENFEKKLEEIITENSVGDYMECTTAAKLAMEKCGTKGILLSFESMSDFTHQINAIDIVNDNIKKYHM.

The protein belongs to the bacterial luciferase oxidoreductase family. In terms of assembly, heterodimer of an alpha and a beta chain.

It carries out the reaction a long-chain fatty aldehyde + FMNH2 + O2 = a long-chain fatty acid + hnu + FMN + H2O + 2 H(+). Its function is as follows. Light-emitting reaction in luminous bacteria. The specific role of the beta subunit is unknown, but it is absolutely required for bioluminescence activity. This Photorhabdus luminescens (Xenorhabdus luminescens) protein is Alkanal monooxygenase beta chain (luxB).